The sequence spans 461 residues: Dihydrolipoyl dehydrogenase (461 aa).

FAD is bound by residues 34–42 (EEDQAGGTC), Lys51, and Gly114. A disulfide bridge links Cys42 with Cys47. Residues 177–181 (GGGVI), Glu200, and 261–264 (AIGR) each bind NAD(+). The FAD site is built by Asp304 and Ala312. His436 acts as the Proton acceptor in catalysis.

The protein belongs to the class-I pyridine nucleotide-disulfide oxidoreductase family. Requires FAD as cofactor.

The protein resides in the cytoplasm. The catalysed reaction is N(6)-[(R)-dihydrolipoyl]-L-lysyl-[protein] + NAD(+) = N(6)-[(R)-lipoyl]-L-lysyl-[protein] + NADH + H(+). Its function is as follows. The branched-chain alpha-keto dehydrogenase complex catalyzes the overall conversion of alpha-keto acids to acyl-CoA and CO(2). It contains multiple copies of 3 enzymatic components: branched-chain alpha-keto acid decarboxylase (E1), lipoamide acyltransferase (E2) and lipoamide dehydrogenase (E3). This chain is Dihydrolipoyl dehydrogenase (lpdA), found in Chlamydia pneumoniae (Chlamydophila pneumoniae).